The chain runs to 346 residues: MLVLGIESSCDETGLALYDTERGLLAHALHSQIAMHREYGGVVPELASRDHIRRALPLLEEVLAASGARRDDIDAIAFTQGPGLAGALLVGASIANALAFAWDKPTIGIHHLEGHLLSPLLVAEPPPFPFVALLVSGGHTQLMRVSDVGVYETLGETLDDAAGEAFDKTAKLLGLGYPGGPEVSRLAEAGTPGAVVLPRPMLHSGDLDFSFSGLKTAVLTQMKKLEAAHAGGAVLERAKADFARGFVDAAVDVLVAKSLAALKATRLKRLVVAGGVGANRQLRAALSAAAQKRGFDVHYPDLALCTDNGAMIALAGALRLARWPSQASRDYAFTVKPRWDLASLAR.

Fe cation is bound by residues His111 and His115. Substrate is bound by residues 134-138 (LVSGG), Asp167, Gly180, and Asn279. Residue Asp307 coordinates Fe cation.

It belongs to the KAE1 / TsaD family. Fe(2+) serves as cofactor.

The protein localises to the cytoplasm. The enzyme catalyses L-threonylcarbamoyladenylate + adenosine(37) in tRNA = N(6)-L-threonylcarbamoyladenosine(37) in tRNA + AMP + H(+). Required for the formation of a threonylcarbamoyl group on adenosine at position 37 (t(6)A37) in tRNAs that read codons beginning with adenine. Is involved in the transfer of the threonylcarbamoyl moiety of threonylcarbamoyl-AMP (TC-AMP) to the N6 group of A37, together with TsaE and TsaB. TsaD likely plays a direct catalytic role in this reaction. This is tRNA N6-adenosine threonylcarbamoyltransferase from Burkholderia pseudomallei (strain 1106a).